We begin with the raw amino-acid sequence, 522 residues long: FAD-dependent monooxygenase fsr3 (522 aa).

Residues Met-1 to Glu-27 are disordered. Residue Arg-164 coordinates FAD. Arg-245 is a catalytic residue. Positions 369 and 382 each coordinate FAD.

It belongs to the paxM FAD-dependent monooxygenase family. The cofactor is FAD.

The protein operates within polyketide biosynthesis. In terms of biological role, FAD-dependent monooxygenase; part of the gene cluster that mediates the biosynthesis of fusarubins, highly pigmented naphthoquinones responsible for the coloration of the fruiting bodies. The non-reducing polyketide synthase FSR1 is responsible for the condensation of seven acetyl-CoA units to yield a haptaketide. After rings A and B are formed by aldol-type cyclization, the PKS-derived product is released as 6-O-demethylfusarubinaldehyde. Then, two hydroxyl groups at C-5 and C-10 are incorporated by FSR3, and simultaneously hydroxyl groups at C-6 and C-8 are methylated by FSR2. The aldehyde is, on the one hand, reduced by FSR3 to 8-O-methylfusarubin alcohol, which equilibrates mainly with 8-O-methylfusarubin and only small amounts of 8-O-methylnectriafurone. On the other hand, the aldehyde can be oxidized to form 8-O-methylfusarubinic acid, a reaction driven by FSR3 equilibrating with 8-O-methylfusarubinlactone, finally resulting in 8-O-methylanhydrofusarubinlactol after a further reduction step and loss of water. 8-O-Methylfusarubinic acid can also undergo decarboxylation, resulting in 8-O-methyl-13-hydroxynorjavanicin after another hydroxylation step at C-13. Both steps are most likely also accomplished by FSR3. No enzymatic function has been determined so far for either FSR4 and FSR5. Their deletion does not alter the product spectrum, but the possibility that they catalyze specific enzymatic steps during perithecium development cannot be ruled out. FSR4 might possess a regulatory function in the biosynthesis of fusarubins. The chain is FAD-dependent monooxygenase fsr3 from Gibberella fujikuroi (strain CBS 195.34 / IMI 58289 / NRRL A-6831) (Bakanae and foot rot disease fungus).